Reading from the N-terminus, the 117-residue chain is Large ribosomal subunit protein bL20c (117 aa).

The protein belongs to the bacterial ribosomal protein bL20 family.

The protein localises to the plastid. In terms of biological role, binds directly to 23S ribosomal RNA and is necessary for the in vitro assembly process of the 50S ribosomal subunit. It is not involved in the protein synthesizing functions of that subunit. The polypeptide is Large ribosomal subunit protein bL20c (rpl20) (Euglena longa (Euglenophycean alga)).